A 339-amino-acid chain; its full sequence is Carboxyvinyl-carboxyphosphonate phosphorylmutase, chloroplastic (339 aa).

A chloroplast-targeting transit peptide spans 1–30 (MSMLMAVKTTSLCCSSLNLTASPTFRRNPR).

The protein belongs to the isocitrate lyase/PEP mutase superfamily.

It is found in the plastid. The protein localises to the chloroplast. It catalyses the reaction 1-carboxyvinyl carboxyphosphonate + H(+) = 3-(hydrohydroxyphosphoryl)pyruvate + CO2. The sequence is that of Carboxyvinyl-carboxyphosphonate phosphorylmutase, chloroplastic from Arabidopsis thaliana (Mouse-ear cress).